The following is a 789-amino-acid chain: Endonuclease MutS2 (789 aa).

334–341 (GPNTGGKT) is a binding site for ATP. Residues 690–714 (PEKDIQQSGTGKIMKSKTGDTKSEV) are disordered. The 76-residue stretch at 714–789 (VDVRGKNLEE…GMGVTIVELK (76 aa)) folds into the Smr domain.

Belongs to the DNA mismatch repair MutS family. MutS2 subfamily. In terms of assembly, homodimer. Binds to stalled ribosomes, contacting rRNA.

In terms of biological role, endonuclease that is involved in the suppression of homologous recombination and thus may have a key role in the control of bacterial genetic diversity. Acts as a ribosome collision sensor, splitting the ribosome into its 2 subunits. Detects stalled/collided 70S ribosomes which it binds and splits by an ATP-hydrolysis driven conformational change. Acts upstream of the ribosome quality control system (RQC), a ribosome-associated complex that mediates the extraction of incompletely synthesized nascent chains from stalled ribosomes and their subsequent degradation. Probably generates substrates for RQC. This is Endonuclease MutS2 from Alkaliphilus metalliredigens (strain QYMF).